The following is a 143-amino-acid chain: Flagellar assembly factor FliW (143 aa).

The protein belongs to the FliW family. As to quaternary structure, interacts with translational regulator CsrA and flagellin(s).

It is found in the cytoplasm. Its function is as follows. Acts as an anti-CsrA protein, binds CsrA and prevents it from repressing translation of its target genes, one of which is flagellin. Binds to flagellin and participates in the assembly of the flagellum. In Clostridium botulinum (strain Langeland / NCTC 10281 / Type F), this protein is Flagellar assembly factor FliW.